Reading from the N-terminus, the 307-residue chain is Putative transcription factor bHLH086 (307 aa).

Disordered regions lie at residues 1–49 and 167–215; these read MSLI…DHQN and HEST…QSLA. 2 stretches are compositionally biased toward polar residues: residues 12-28 and 183-197; these read NYISTPNSSEDLSSPQN and GENTQLSKKPSSGTN. Residues 207–220 form a basic motif region; sequence SPKDPQSLAAKNRR. Positions 207–256 constitute a bHLH domain; it reads SPKDPQSLAAKNRRERISERLKVLQELVPNGTKVDLVTMLEKAIGYVKFL. The helix-loop-helix motif stretch occupies residues 221–256; the sequence is ERISERLKVLQELVPNGTKVDLVTMLEKAIGYVKFL.

Homodimer. Forms heterodimers with RHD6. Interacts with TIFY10B/JAZ2, TIFY6A/JAZ4, TIFY5A/JAZ8, TIFY7/JAZ9 and TIFY9/JAZ10.

The protein localises to the nucleus. Its function is as follows. Transcription factor that is specifically required for the development of root hairs. Acts with RHD6 to positively regulate root hair development. Acts downstream of genes that regulate epidermal pattern formation, such as GL2. Acts with RHD6 as transcription factor that integrates a jasmonate (JA) signaling pathway that stimulates root hair growth. The protein is Putative transcription factor bHLH086 of Arabidopsis thaliana (Mouse-ear cress).